Here is a 263-residue protein sequence, read N- to C-terminus: Protein YpjB (263 aa).

Over residues 233–244 (DFDDSSSEDDPV) the composition is skewed to acidic residues. The disordered stretch occupies residues 233 to 263 (DFDDSSSEDDPVENSPVVTSPVVSSSKSSFQ). The span at 245–263 (ENSPVVTSPVVSSSKSSFQ) shows a compositional bias: low complexity.

This Escherichia coli (strain K12) protein is Protein YpjB (ypjB).